Consider the following 331-residue polypeptide: Probable endo-beta-1,4-glucanase B (331 aa).

Positions 1–18 (MKFQSTLLLAAAAGSALA) are cleaved as a signal peptide. 2 N-linked (GlcNAc...) asparagine glycosylation sites follow: Asn38 and Asn100. Residue Glu160 is the Proton donor of the active site. Asn211 carries an N-linked (GlcNAc...) asparagine glycan. Catalysis depends on Glu266, which acts as the Nucleophile. Asn288 is a glycosylation site (N-linked (GlcNAc...) asparagine).

It belongs to the glycosyl hydrolase 5 (cellulase A) family.

The protein localises to the secreted. It catalyses the reaction Endohydrolysis of (1-&gt;4)-beta-D-glucosidic linkages in cellulose, lichenin and cereal beta-D-glucans.. Has endoglucanase activity on substrates containing beta-1,4 glycosidic bonds, like in carboxymethylcellulose (CMC), hydroxyethylcellulose (HEC) and beta-glucan. Involved in the degradation of complex natural cellulosic substrates. This chain is Probable endo-beta-1,4-glucanase B (eglB), found in Aspergillus niger (strain ATCC MYA-4892 / CBS 513.88 / FGSC A1513).